Reading from the N-terminus, the 151-residue chain is Putative pre-16S rRNA nuclease (151 aa).

The protein belongs to the YqgF nuclease family.

The protein localises to the cytoplasm. In terms of biological role, could be a nuclease involved in processing of the 5'-end of pre-16S rRNA. The polypeptide is Putative pre-16S rRNA nuclease (Bifidobacterium adolescentis (strain ATCC 15703 / DSM 20083 / NCTC 11814 / E194a)).